A 294-amino-acid polypeptide reads, in one-letter code: Small ribosomal subunit biogenesis GTPase RsgA 2, mitochondrial (294 aa).

The transit peptide at 1–68 directs the protein to the mitochondrion; the sequence is MQTFSSAAAL…RSFLAPVLPL (68 aa). Positions 155-294 constitute a CP-type G domain; sequence VSEVLDPPVA…VSFFLSYFIL (140 aa). Position 255–263 (255–263) interacts with GTP; that stretch reads GPSGVGKSS.

This sequence belongs to the TRAFAC class YlqF/YawG GTPase family.

It is found in the mitochondrion. The sequence is that of Small ribosomal subunit biogenesis GTPase RsgA 2, mitochondrial from Arabidopsis thaliana (Mouse-ear cress).